The chain runs to 518 residues: Kelch repeat and BTB domain-containing protein 4 (518 aa).

The 68-residue stretch at 45 to 112 (ADVTISVEGR…IYHGTVKLRA (68 aa)) folds into the BTB domain. Residues 147-239 (CLQVMWLADR…SLKEIGENVH (93 aa)) enclose the BACK domain. 5 Kelch repeats span residues 239 to 285 (HIYL…KHGG), 286 to 328 (DLYV…SVPG), 331 to 378 (AIYS…NLNG), 380 to 430 (IYLL…VHKD), and 432 to 481 (VFIV…VFRD).

Component of the BCR(KBTBD4) E3 ubiquitin ligase complex, at least composed of CUL3, KBTBD4 and RBX1.

In terms of biological role, substrate-specific adapter of a BCR (BTB-CUL3-RBX1) E3 ubiquitin ligase complex which targets CoREST corepressor complex components RCOR1, KDM1A/LSD1 and HDAC2 for proteasomal degradation. RCOR1 is likely to be the primary target while degradation of KDM1A and HDAC2 is likely due to their association with RCOR1. Also targets RCOR3, MIER2 and MIER3 for proteasomal degradation as well as associated proteins ZNF217 and RREB1. Degradation is dependent on the presence of an ELM2 domain in the target proteins. This Pongo abelii (Sumatran orangutan) protein is Kelch repeat and BTB domain-containing protein 4 (KBTBD4).